The primary structure comprises 329 residues: tRNA dimethylallyltransferase (329 aa).

12 to 19 (GPTSVGKT) provides a ligand contact to ATP. 14–19 (TSVGKT) serves as a coordination point for substrate. The interval 37-40 (DSRY) is interaction with substrate tRNA. The tract at residues 306–329 (LREESDEGDVAVHQSGGGKEAPRA) is disordered. Residues 320-329 (SGGGKEAPRA) are compositionally biased toward gly residues.

This sequence belongs to the IPP transferase family. Monomer. It depends on Mg(2+) as a cofactor.

It catalyses the reaction adenosine(37) in tRNA + dimethylallyl diphosphate = N(6)-dimethylallyladenosine(37) in tRNA + diphosphate. Catalyzes the transfer of a dimethylallyl group onto the adenine at position 37 in tRNAs that read codons beginning with uridine, leading to the formation of N6-(dimethylallyl)adenosine (i(6)A). This chain is tRNA dimethylallyltransferase, found in Thermomicrobium roseum (strain ATCC 27502 / DSM 5159 / P-2).